Here is an 829-residue protein sequence, read N- to C-terminus: Probable beta-glucosidase H (829 aa).

An N-linked (GlcNAc...) asparagine glycan is attached at Asn-13. Residue Asp-225 is part of the active site. 6 N-linked (GlcNAc...) asparagine glycosylation sites follow: Asn-304, Asn-473, Asn-602, Asn-627, Asn-664, and Asn-749. In terms of domain architecture, PA14 spans 389–548 (RMLSNAVIHF…DPEQMVANAV (160 aa)).

This sequence belongs to the glycosyl hydrolase 3 family.

Its subcellular location is the secreted. The catalysed reaction is Hydrolysis of terminal, non-reducing beta-D-glucosyl residues with release of beta-D-glucose.. Its pathway is glycan metabolism; cellulose degradation. Its function is as follows. Beta-glucosidases are one of a number of cellulolytic enzymes involved in the degradation of cellulosic biomass. Catalyzes the last step releasing glucose from the inhibitory cellobiose. The protein is Probable beta-glucosidase H (bglH) of Aspergillus fumigatus (strain CBS 144.89 / FGSC A1163 / CEA10) (Neosartorya fumigata).